Here is a 186-residue protein sequence, read N- to C-terminus: Ribulose bisphosphate carboxylase small subunit, chloroplastic 6 (186 aa).

The N-terminal 60 residues, Met-1–Gln-60, are a transit peptide targeting the chloroplast.

The protein belongs to the RuBisCO small chain family. In terms of assembly, heterohexadecamer of 8 large and 8 small subunits.

It localises to the plastid. The protein resides in the chloroplast. RuBisCO catalyzes two reactions: the carboxylation of D-ribulose 1,5-bisphosphate, the primary event in carbon dioxide fixation, as well as the oxidative fragmentation of the pentose substrate. Both reactions occur simultaneously and in competition at the same active site. Although the small subunit is not catalytic it is essential for maximal activity. This Mesembryanthemum crystallinum (Common ice plant) protein is Ribulose bisphosphate carboxylase small subunit, chloroplastic 6.